Reading from the N-terminus, the 330-residue chain is Major ferric iron-binding protein (330 aa).

The signal sequence occupies residues methionine 1–alanine 22. Residues histidine 31, glutamate 79, tyrosine 217, and tyrosine 218 each contribute to the Fe cation site.

The protein belongs to the bacterial solute-binding protein 1 family.

The protein resides in the periplasm. In terms of biological role, this protein may be a central component in the iron-acquisition system. The polypeptide is Major ferric iron-binding protein (fbp) (Neisseria gonorrhoeae).